Here is a 413-residue protein sequence, read N- to C-terminus: Serine protease inhibitor A3L (413 aa).

The N-terminal stretch at 1–28 is a signal peptide; it reads MAFIAALGLLMAGICPAVLCDGTLGRDT. Serine 30 is modified (phosphoserine). N-linked (GlcNAc...) asparagine glycans are attached at residues asparagine 102, asparagine 182, asparagine 220, and asparagine 267. The RCL stretch occupies residues 365–389; it reads GTEATAATGVATVIRRQPRTLNFNR.

It belongs to the serpin family. Post-translationally, N-glycosylated. Liver.

The protein resides in the secreted. This Rattus norvegicus (Rat) protein is Serine protease inhibitor A3L (Serpina3l).